We begin with the raw amino-acid sequence, 443 residues long: 3-ketoacyl-CoA thiolase 1, peroxisomal (443 aa).

Residues 1 to 30 (MEKATERQRILLRHLQPSSSSDASLSASAC) constitute a peroxisome transit peptide. The active-site Acyl-thioester intermediate is the cysteine 130. Catalysis depends on proton acceptor residues histidine 385 and cysteine 417.

It belongs to the thiolase-like superfamily. Thiolase family. As to quaternary structure, homodimer. Low levels in seedlings and leaves.

Its subcellular location is the peroxisome. The catalysed reaction is an acyl-CoA + acetyl-CoA = a 3-oxoacyl-CoA + CoA. Its pathway is lipid metabolism; fatty acid metabolism. Functionally, involved in fatty-acid beta-oxidation prior to gluconeogenesis during germination and subsequent seedling growth. Implicated in jasmonic acid (JA) biosynthesis. The chain is 3-ketoacyl-CoA thiolase 1, peroxisomal (KAT1) from Arabidopsis thaliana (Mouse-ear cress).